Here is a 175-residue protein sequence, read N- to C-terminus: Ribosome maturation factor RimM (175 aa).

The 80-residue stretch at 96–175 (DGDYYWKDLI…IIKVDWDPEF (80 aa)) folds into the PRC barrel domain.

This sequence belongs to the RimM family. Binds ribosomal protein uS19.

It is found in the cytoplasm. Its function is as follows. An accessory protein needed during the final step in the assembly of 30S ribosomal subunit, possibly for assembly of the head region. Essential for efficient processing of 16S rRNA. May be needed both before and after RbfA during the maturation of 16S rRNA. It has affinity for free ribosomal 30S subunits but not for 70S ribosomes. This is Ribosome maturation factor RimM from Baumannia cicadellinicola subsp. Homalodisca coagulata.